A 312-amino-acid polypeptide reads, in one-letter code: Glycerol-3-phosphate dehydrogenase [NAD(P)+] (312 aa).

NADPH contacts are provided by Trp-11, Arg-30, Arg-31, and Lys-95. Positions 95, 123, and 125 each coordinate sn-glycerol 3-phosphate. Ala-127 is an NADPH binding site. Sn-glycerol 3-phosphate is bound by residues Lys-177, Asp-230, Ser-240, Arg-241, and Asn-242. Residue Lys-177 is the Proton acceptor of the active site. Position 241 (Arg-241) interacts with NADPH. Residues Val-265 and Glu-267 each contribute to the NADPH site.

The protein belongs to the NAD-dependent glycerol-3-phosphate dehydrogenase family.

Its subcellular location is the cytoplasm. It carries out the reaction sn-glycerol 3-phosphate + NAD(+) = dihydroxyacetone phosphate + NADH + H(+). The enzyme catalyses sn-glycerol 3-phosphate + NADP(+) = dihydroxyacetone phosphate + NADPH + H(+). It participates in membrane lipid metabolism; glycerophospholipid metabolism. Functionally, catalyzes the reduction of the glycolytic intermediate dihydroxyacetone phosphate (DHAP) to sn-glycerol 3-phosphate (G3P), the key precursor for phospholipid synthesis. The polypeptide is Glycerol-3-phosphate dehydrogenase [NAD(P)+] (Helicobacter pylori (strain HPAG1)).